Here is a 390-residue protein sequence, read N- to C-terminus: Phosphopentomutase (390 aa).

Residues Asp9, Asp283, His288, Asp324, His325, and His336 each coordinate Mn(2+).

Belongs to the phosphopentomutase family. It depends on Mn(2+) as a cofactor.

It is found in the cytoplasm. It carries out the reaction 2-deoxy-alpha-D-ribose 1-phosphate = 2-deoxy-D-ribose 5-phosphate. It catalyses the reaction alpha-D-ribose 1-phosphate = D-ribose 5-phosphate. Its pathway is carbohydrate degradation; 2-deoxy-D-ribose 1-phosphate degradation; D-glyceraldehyde 3-phosphate and acetaldehyde from 2-deoxy-alpha-D-ribose 1-phosphate: step 1/2. In terms of biological role, isomerase that catalyzes the conversion of deoxy-ribose 1-phosphate (dRib-1-P) and ribose 1-phosphate (Rib-1-P) to deoxy-ribose 5-phosphate (dRib-5-P) and ribose 5-phosphate (Rib-5-P), respectively. The protein is Phosphopentomutase of Thermotoga petrophila (strain ATCC BAA-488 / DSM 13995 / JCM 10881 / RKU-1).